We begin with the raw amino-acid sequence, 306 residues long: Leucine-rich repeat-containing protein 59 (306 aa).

At M1 the chain carries N-acetylmethionine. T2 carries the post-translational modification N-acetylthreonine; in Leucine-rich repeat-containing protein 59, N-terminally processed. At 2–244 (TKAGSKGGNL…KPPPRKHTRS (243 aa)) the chain is on the cytoplasmic side. 5 LRR repeats span residues 10–31 (NLRD…NEVP), 40–62 (KATV…CGLT), 63–84 (HLVK…FGRL), 86–107 (NLQH…FAQL), and 109–128 (SLKW…AKVA). Phosphoserine occurs at positions 23 and 25. K73 bears the N6-succinyllysine mark. K135 bears the N6-acetyllysine mark. Positions 152 to 216 (QADQERERQR…KAAKREQEKK (65 aa)) form a coiled coil. Basic and acidic residues predominate over residues 175–221 (AKQRAKEAQERELRKREKAEEKERRRKEYDALKAAKREQEKKPKKET). Residues 175–241 (AKQRAKEAQE…RPRKPPPRKH (67 aa)) are disordered. Residues 229-241 (SSSRPRKPPPRKH) show a composition bias toward basic residues. A helical membrane pass occupies residues 245-265 (WAVLKLLLLLLLCVAGGLVAC). At 266–306 (RVTELQQQPLCTSVNTIYDNAVRGLRSHDILQWVLQTDSQQ) the chain is on the lumenal side.

Can form homodimers. Interacts with SGO1. Interacts with FGF1.

The protein localises to the microsome membrane. Its subcellular location is the endoplasmic reticulum membrane. The protein resides in the nucleus envelope. Required for nuclear import of FGF1, but not that of FGF2. Might regulate nuclear import of exogenous FGF1 by facilitating interaction with the nuclear import machinery and by transporting cytosolic FGF1 to, and possibly through, the nuclear pores. The chain is Leucine-rich repeat-containing protein 59 (LRRC59) from Bos taurus (Bovine).